The primary structure comprises 197 residues: Probable GTP-binding protein EngB (197 aa).

One can recognise an EngB-type G domain in the interval 25–197; sequence SAPEIAFAGR…VRDEFFKFTR (173 aa). Residues 33 to 40, 60 to 64, 79 to 82, 146 to 149, and 177 to 179 contribute to the GTP site; these read GRSNVGKS, GCTRQ, DLPG, TKID, and MSI. Residues Ser40 and Thr62 each coordinate Mg(2+).

Belongs to the TRAFAC class TrmE-Era-EngA-EngB-Septin-like GTPase superfamily. EngB GTPase family. The cofactor is Mg(2+).

Necessary for normal cell division and for the maintenance of normal septation. In Wolbachia sp. subsp. Drosophila simulans (strain wRi), this protein is Probable GTP-binding protein EngB.